A 307-amino-acid chain; its full sequence is Pantothenate kinase (307 aa).

Residue Gly-90–Ser-97 participates in ATP binding.

The protein belongs to the prokaryotic pantothenate kinase family.

It is found in the cytoplasm. The catalysed reaction is (R)-pantothenate + ATP = (R)-4'-phosphopantothenate + ADP + H(+). It participates in cofactor biosynthesis; coenzyme A biosynthesis; CoA from (R)-pantothenate: step 1/5. The chain is Pantothenate kinase from Limosilactobacillus reuteri subsp. reuteri (strain JCM 1112) (Lactobacillus reuteri).